Reading from the N-terminus, the 793-residue chain is Kinesin-like protein KIF3C (793 aa).

One can recognise a Kinesin motor domain in the interval 10–365; it reads ALKVVARCRP…LRFANRAKNI (356 aa). 97–104 is a binding site for ATP; the sequence is GQTGTGKT. Disordered stretches follow at residues 251–288, 395–423, and 756–793; these read ERQN…ERPK, EKRG…GYPE, and KVRK…ADHE. Gly residues predominate over residues 270–284; the sequence is GGSGGGGGSGGGAGG. A coiled-coil region spans residues 376 to 630; sequence KDTLLREFQE…QNEQTRELKL (255 aa). The segment covering 399-413 has biased composition (basic residues); the sequence is MLGKRPRRKSSRGKK. The tract at residues 631-793 is globular; that stretch reads KYLIIENFIP…LRPATVADHE (163 aa).

It belongs to the TRAFAC class myosin-kinesin ATPase superfamily. Kinesin family. Kinesin II subfamily. Heterodimer of KIF3A and KIF3C.

Its subcellular location is the cytoplasm. It is found in the cytoskeleton. Microtubule-based anterograde translocator for membranous organelles. The polypeptide is Kinesin-like protein KIF3C (KIF3C) (Pongo abelii (Sumatran orangutan)).